The sequence spans 162 residues: Protein lon-8 (162 aa).

Positions 1–23 (MRNSRFCAILAVISAISVSYVLA) are cleaved as a signal peptide.

The protein localises to the secreted. Secreted protein that is involved in larval elongation, early adult growth and male tail development. The sequence is that of Protein lon-8 from Caenorhabditis elegans.